Consider the following 525-residue polypeptide: GMP synthase [glutamine-hydrolyzing] (525 aa).

The Glutamine amidotransferase type-1 domain occupies 9 to 207; it reads RILILDFGSQ…VLDICACEAL (199 aa). C86 (nucleophile) is an active-site residue. Catalysis depends on residues H181 and E183. Positions 208–400 constitute a GMPS ATP-PPase domain; that stretch reads WTPATIIEDA…LGLPYDMLYR (193 aa). 235–241 is a binding site for ATP; that stretch reads SGGVDSS.

Homodimer.

It catalyses the reaction XMP + L-glutamine + ATP + H2O = GMP + L-glutamate + AMP + diphosphate + 2 H(+). Its pathway is purine metabolism; GMP biosynthesis; GMP from XMP (L-Gln route): step 1/1. In terms of biological role, catalyzes the synthesis of GMP from XMP. The protein is GMP synthase [glutamine-hydrolyzing] of Yersinia enterocolitica serotype O:8 / biotype 1B (strain NCTC 13174 / 8081).